The sequence spans 206 residues: Protein Nef (206 aa).

Gly-2 carries N-myristoyl glycine; by host lipidation. Position 6 is a phosphoserine; by host (Ser-6). Residues 62–65 are acidic; interacts with host PACS1 and PACS2; stabilizes the interaction of NEF/MHC-I with host AP1M1; necessary for MHC-I internalization; that stretch reads EEEE. Positions 69 to 78 are SH3-binding; interaction with Src family tyrosine kinases; sequence PVTPQVPLRP. The short motif at 72 to 75 is the PxxP; stabilizes the interaction of NEF/MHC-I with host AP1M1; necessary for MHC-I internalization element; it reads PQVP. Residues 108–124 are mediates dimerization, Nef-PTE1 interaction; that stretch reads DILDLWIYHTQGYFPDW. The interval 148–180 is binding to ATP6V1H; sequence VEPEKLEEANKGENTSLLHPVSLHGMDDPEREV. Residues 164 to 165 carry the Dileucine internalization motif; necessary for CD4 internalization motif; the sequence is LL. Positions 174-175 match the Diacidic; necessary for CD4 internalization motif; the sequence is DD.

The protein belongs to the lentivirus primate group Nef protein family. Monomer; cytosolic form. Homodimer; membrane bound form. Interacts with Nef associated p21-activated kinase (PAK2); this interaction activates PAK2. Associates with the Nef-MHC-I-AP1 complex; this complex is required for MHC-I internalization. Interacts (via C-terminus) with host PI3-kinase. Interacts with host PACS1; this interaction seems to be weak. Interacts with host PACS2. Interacts with host LCK and MAPK3; these interactions inhibit the kinase activity of the latter. Interacts with host ATP6V1H; this interaction may play a role in CD4 endocytosis. Associates with the CD4-Nef-AP2 complex; this complex is required for CD4 internalization. Interacts with host AP2 subunit alpha and AP2 subunit sigma2. Interacts with TCR-zeta chain; this interaction up-regulates the Fas ligand (FasL) surface expression. Interacts with host HCK, LYN, and SRC; these interactions activate the Src family kinases. Interacts with MAP3K5; this interaction inhibits the Fas and TNFR-mediated death signals. Interacts with beta-COP and PTE1. Interacts with human RACK1; this increases Nef phosphorylation by PKC. Interacts with TP53; this interaction decreases the half-life of TP53, protecting the infected cell against p53-mediated apoptosis. The virion-associated Nef proteins are cleaved by the viral protease to release the soluble C-terminal core protein. Nef is probably cleaved concomitantly with viral structural proteins on maturation of virus particles. Post-translationally, myristoylated. In terms of processing, phosphorylated on serine residues, probably by host PKCdelta and theta.

The protein localises to the host cell membrane. Its subcellular location is the virion. It is found in the secreted. The protein resides in the host Golgi apparatus membrane. In terms of biological role, factor of infectivity and pathogenicity, required for optimal virus replication. Alters numerous pathways of T-lymphocyte function and down-regulates immunity surface molecules in order to evade host defense and increase viral infectivity. Alters the functionality of other immunity cells, like dendritic cells, monocytes/macrophages and NK cells. Its function is as follows. In infected CD4(+) T-lymphocytes, down-regulates the surface MHC-I, mature MHC-II, CD4, CD28, CCR5 and CXCR4 molecules. Mediates internalization and degradation of host CD4 through the interaction of with the cytoplasmic tail of CD4, the recruitment of AP-2 (clathrin adapter protein complex 2), internalization through clathrin coated pits, and subsequent transport to endosomes and lysosomes for degradation. Diverts host MHC-I molecules to the trans-Golgi network-associated endosomal compartments by an endocytic pathway to finally target them for degradation. MHC-I down-regulation may involve AP-1 (clathrin adapter protein complex 1) or possibly Src family kinase-ZAP70/Syk-PI3K cascade recruited by PACS2. In consequence infected cells are masked for immune recognition by cytotoxic T-lymphocytes. Decreasing the number of immune receptors also prevents reinfection by more HIV particles (superinfection). Down-regulates host SERINC3 and SERINC5 thereby excluding these proteins from the viral particles. Virion infectivity is drastically higher when SERINC3 or SERINC5 are excluded from the viral envelope, because these host antiviral proteins impair the membrane fusion event necessary for subsequent virion penetration. Bypasses host T-cell signaling by inducing a transcriptional program nearly identical to that of anti-CD3 cell activation. Interaction with TCR-zeta chain up-regulates the Fas ligand (FasL). Increasing surface FasL molecules and decreasing surface MHC-I molecules on infected CD4(+) cells send attacking cytotoxic CD8+ T-lymphocytes into apoptosis. Functionally, plays a role in optimizing the host cell environment for viral replication without causing cell death by apoptosis. Protects the infected cells from apoptosis in order to keep them alive until the next virus generation is ready to strike. Inhibits the Fas and TNFR-mediated death signals by blocking MAP3K5/ASK1. Decreases the half-life of TP53, protecting the infected cell against p53-mediated apoptosis. Inhibits the apoptotic signals regulated by the Bcl-2 family proteins through the formation of a Nef/PI3-kinase/PAK2 complex that leads to activation of PAK2 and induces phosphorylation of host BAD. In terms of biological role, extracellular Nef protein targets CD4(+) T-lymphocytes for apoptosis by interacting with CXCR4 surface receptors. This chain is Protein Nef, found in Human immunodeficiency virus type 1 group M subtype B (isolate LW123) (HIV-1).